Consider the following 599-residue polypeptide: Elongation factor 4 (599 aa).

A tr-type G domain is found at 2–184; sequence NHIRNFSIIA…RLVRDIPAPE (183 aa). GTP-binding positions include 14-19 and 131-134; these read DHGKST and NKID.

The protein belongs to the TRAFAC class translation factor GTPase superfamily. Classic translation factor GTPase family. LepA subfamily.

It is found in the cell inner membrane. The catalysed reaction is GTP + H2O = GDP + phosphate + H(+). Functionally, required for accurate and efficient protein synthesis under certain stress conditions. May act as a fidelity factor of the translation reaction, by catalyzing a one-codon backward translocation of tRNAs on improperly translocated ribosomes. Back-translocation proceeds from a post-translocation (POST) complex to a pre-translocation (PRE) complex, thus giving elongation factor G a second chance to translocate the tRNAs correctly. Binds to ribosomes in a GTP-dependent manner. The sequence is that of Elongation factor 4 from Yersinia pestis (strain Pestoides F).